We begin with the raw amino-acid sequence, 590 residues long: CTP synthase (590 aa).

The interval 1–278 (MRKHPQSATK…DAFVVRRLNL (278 aa)) is amidoligase domain. Residue S20 coordinates CTP. A UTP-binding site is contributed by S20. ATP contacts are provided by residues 21-26 (SLGKGL) and D78. D78 and E152 together coordinate Mg(2+). CTP is bound by residues 159–161 (DIE), 199–204 (KTKPTQ), and K235. UTP is bound by residues 199 to 204 (KTKPTQ) and K235. The Glutamine amidotransferase type-1 domain maps to 303-551 (RIALVGKYVD…VGAAIDYKSA (249 aa)). G366 lines the L-glutamine pocket. The Nucleophile; for glutamine hydrolysis role is filled by C393. L-glutamine-binding positions include 394–397 (LGLQ), E416, and R477. Active-site residues include H524 and E526. The segment at 566–590 (EHLPNSSNQHRDGVERSFPAPAARG) is disordered.

Belongs to the CTP synthase family. In terms of assembly, homotetramer.

The catalysed reaction is UTP + L-glutamine + ATP + H2O = CTP + L-glutamate + ADP + phosphate + 2 H(+). It carries out the reaction L-glutamine + H2O = L-glutamate + NH4(+). The enzyme catalyses UTP + NH4(+) + ATP = CTP + ADP + phosphate + 2 H(+). It functions in the pathway pyrimidine metabolism; CTP biosynthesis via de novo pathway; CTP from UDP: step 2/2. With respect to regulation, allosterically activated by GTP, when glutamine is the substrate; GTP has no effect on the reaction when ammonia is the substrate. The allosteric effector GTP functions by stabilizing the protein conformation that binds the tetrahedral intermediate(s) formed during glutamine hydrolysis. Inhibited by the product CTP, via allosteric rather than competitive inhibition. Catalyzes the ATP-dependent amination of UTP to CTP with either L-glutamine or ammonia as the source of nitrogen. Regulates intracellular CTP levels through interactions with the four ribonucleotide triphosphates. The sequence is that of CTP synthase from Mycobacterium leprae (strain Br4923).